Consider the following 589-residue polypeptide: Serine/threonine-protein phosphatase 2A 65 kDa regulatory subunit A alpha isoform (589 aa).

The residue at position 2 (Ala-2) is an N-acetylalanine. HEAT repeat units lie at residues 8-46 (DSLY…GVER), 47-84 (TRSE…GGPE), 85-123 (YVHC…SPSD), 124-161 (LEAH…VSSA), 162-200 (VKAE…ELDN), 201-239 (VKSE…PQED), 240-278 (LEAL…GPEI), 279-321 (TKTD…RENV), 322-360 (IMTQ…GKDN), 361-399 (TIEH…GIRQ), 400-438 (LSQS…GVEF), 439-477 (FDEK…GKEW), 478-516 (AHAT…GQDI), 517-555 (TTKH…DNST), and 556-589 (LQSE…LSLA). Residue Lys-280 is modified to N6-acetyllysine.

This sequence belongs to the phosphatase 2A regulatory subunit A family. PP2A consists of a common heterodimeric core enzyme, composed of PPP2CA a 36 kDa catalytic subunit (subunit C) and PPP2R1A a 65 kDa constant regulatory subunit (PR65 or subunit A), that associates with a variety of regulatory subunits. Proteins that associate with the core dimer include three families of regulatory subunits B (the R2/B/PR55/B55, R3/B''/PR72/PR130/PR59 and R5/B'/B56 families), the 48 kDa variable regulatory subunit, viral proteins, and cell signaling molecules. Found in a complex with at least ARL2, PPP2CB, PPP2R1A, PPP2R2A, PPP2R5E and TBCD. Interacts with the PP2A C catalytic subunit PPP2CA. Interacts with the PP2A B subunit PPP2R2A. Interacts with the PP2A B subunit PPP2R5D. Interacts with FOXO1; the interaction dephosphorylates FOXO1 on AKT-mediated phosphorylation sites. Interacts with IPO9. Interacts with TP53 and SGO1. Interacts with PLA2G16; this interaction might decrease PP2A activity. Interacts with CTTNBP2NL. Interacts with GNA12; the interaction promotes protein phosphatase 2A activation causing dephosphorylation of MAPT. Interacts with CIP2A; this interaction stabilizes CIP2A. Interacts with PABIR1/FAM122A. Interacts with ADCY8; antagonizes interaction between ADCY8 and calmodulin. Interacts with CRTC3 (when phosphorylated at 'Ser-391'). Interacts with SPRY2. Part of the core of STRIPAK complexes composed of PP2A catalytic and scaffolding subunits, the striatins (PP2A regulatory subunits), the striatin-associated proteins MOB4, STRIP1 and STRIP2, PDCD10 and members of the STE20 kinases, such as STK24 and STK26. Component of the Integrator-PP2A (INTAC) complex, composed of the Integrator core complex and protein phosphatase 2A subunits PPP2CA and PPP2R1A.

It localises to the cytoplasm. Its subcellular location is the nucleus. The protein localises to the chromosome. The protein resides in the centromere. It is found in the lateral cell membrane. It localises to the cell projection. Its subcellular location is the dendrite. The PR65 subunit of protein phosphatase 2A serves as a scaffolding molecule to coordinate the assembly of the catalytic subunit and a variable regulatory B subunit. Upon interaction with GNA12 promotes dephosphorylation of microtubule associated protein TAU/MAPT. Required for proper chromosome segregation and for centromeric localization of SGO1 in mitosis. Together with RACK1 adapter, mediates dephosphorylation of AKT1 at 'Ser-473', preventing AKT1 activation and AKT-mTOR signaling pathway. Dephosphorylation of AKT1 is essential for regulatory T-cells (Treg) homeostasis and stability. Part of the striatin-interacting phosphatase and kinase (STRIPAK) complexes. STRIPAK complexes have critical roles in protein (de)phosphorylation and are regulators of multiple signaling pathways including Hippo, MAPK, nuclear receptor and cytoskeleton remodeling. Different types of STRIPAK complexes are involved in a variety of biological processes such as cell growth, differentiation, apoptosis, metabolism and immune regulation. Key mediator of a quality checkpoint during transcription elongation as part of the Integrator-PP2A (INTAC) complex. The INTAC complex drives premature transcription termination of transcripts that are unfavorably configured for transcriptional elongation: within the INTAC complex, acts as a scaffolding subunit for PPP2CA, which catalyzes dephosphorylation of the C-terminal domain (CTD) of Pol II subunit POLR2A/RPB1 and SUPT5H/SPT5, thereby preventing transcriptional elongation. Regulates the recruitment of the SKA complex to kinetochores. The protein is Serine/threonine-protein phosphatase 2A 65 kDa regulatory subunit A alpha isoform (Ppp2r1a) of Mus musculus (Mouse).